The chain runs to 171 residues: Calcium-binding allergen Ole e 8 (171 aa).

4 consecutive EF-hand domains span residues 16 to 51, 52 to 87, 92 to 127, and 128 to 163; these read QEPNEVQGVFNRFDANGDGKISGDELAGVLKALGSN, TSKEEIGRIMEEIDTDKDGFINVQEFAAFVKAETDP, GGENELKEAFELYDQDHNGLISSVELHKILTRLGER, and YAEHDCVEMIKSVDSDGDGYVSFEEFKKMMTNKSGN. The Ca(2+) site is built by Asp-29, Asn-31, Asp-33, Lys-35, Glu-40, Asp-65, Asp-67, Asp-69, Glu-76, Asp-105, Asp-107, Asn-109, Glu-116, Asp-141, Asp-143, Asp-145, Tyr-147, and Glu-152.

As to quaternary structure, homodimer. Expressed in pollen.

This Olea europaea (Common olive) protein is Calcium-binding allergen Ole e 8.